The primary structure comprises 642 residues: Threonine--tRNA ligase (642 aa).

Positions 1–61 (MPIITLPDGS…EEDASLEIIT (61 aa)) constitute a TGS domain. Positions 244–535 (DHRKIGKQLD…LIEEYAGFFP (292 aa)) are catalytic. Residues Cys-335, His-386, and His-512 each contribute to the Zn(2+) site.

Belongs to the class-II aminoacyl-tRNA synthetase family. As to quaternary structure, homodimer. Zn(2+) is required as a cofactor.

It is found in the cytoplasm. It catalyses the reaction tRNA(Thr) + L-threonine + ATP = L-threonyl-tRNA(Thr) + AMP + diphosphate + H(+). Functionally, catalyzes the attachment of threonine to tRNA(Thr) in a two-step reaction: L-threonine is first activated by ATP to form Thr-AMP and then transferred to the acceptor end of tRNA(Thr). Also edits incorrectly charged L-seryl-tRNA(Thr). This chain is Threonine--tRNA ligase, found in Vibrio vulnificus (strain CMCP6).